A 371-amino-acid polypeptide reads, in one-letter code: Peptide chain release factor 2 (371 aa).

The residue at position 250 (glutamine 250) is an N5-methylglutamine.

This sequence belongs to the prokaryotic/mitochondrial release factor family. Post-translationally, methylated by PrmC. Methylation increases the termination efficiency of RF2.

The protein resides in the cytoplasm. Peptide chain release factor 2 directs the termination of translation in response to the peptide chain termination codons UGA and UAA. The protein is Peptide chain release factor 2 of Paramagnetospirillum magneticum (strain ATCC 700264 / AMB-1) (Magnetospirillum magneticum).